The primary structure comprises 211 residues: NADH-quinone oxidoreductase subunit C (211 aa).

It belongs to the complex I 30 kDa subunit family. NDH-1 is composed of 14 different subunits. Subunits NuoB, C, D, E, F, and G constitute the peripheral sector of the complex.

It is found in the cell inner membrane. It carries out the reaction a quinone + NADH + 5 H(+)(in) = a quinol + NAD(+) + 4 H(+)(out). Functionally, NDH-1 shuttles electrons from NADH, via FMN and iron-sulfur (Fe-S) centers, to quinones in the respiratory chain. The immediate electron acceptor for the enzyme in this species is believed to be ubiquinone. Couples the redox reaction to proton translocation (for every two electrons transferred, four hydrogen ions are translocated across the cytoplasmic membrane), and thus conserves the redox energy in a proton gradient. The protein is NADH-quinone oxidoreductase subunit C of Azorhizobium caulinodans (strain ATCC 43989 / DSM 5975 / JCM 20966 / LMG 6465 / NBRC 14845 / NCIMB 13405 / ORS 571).